The following is a 963-amino-acid chain: Exportin-T (963 aa).

Position 1 is an N-acetylmethionine (Met-1). An N6-acetyllysine modification is found at Lys-635.

Belongs to the exportin family. Found in a complex with XPOT, Ran and tRNA. Probably found in a complex with nucleoporins. Interacts with Ran and tRNA in a GTP-dependent manner.

It localises to the nucleus. Its subcellular location is the cytoplasm. Its function is as follows. Mediates the nuclear export of aminoacylated tRNAs. In the nucleus binds to tRNA and to the GTPase Ran in its active GTP-bound form. Docking of this trimeric complex to the nuclear pore complex (NPC) is mediated through binding to nucleoporins. Upon transit of a nuclear export complex into the cytoplasm, disassembling of the complex and hydrolysis of Ran-GTP to Ran-GDP (induced by RANBP1 and RANGAP1, respectively) cause release of the tRNA from the export receptor. XPOT then return to the nuclear compartment and mediate another round of transport. The directionality of nuclear export is thought to be conferred by an asymmetric distribution of the GTP- and GDP-bound forms of Ran between the cytoplasm and nucleus. In Mus musculus (Mouse), this protein is Exportin-T (Xpot).